We begin with the raw amino-acid sequence, 749 residues long: Catalase-peroxidase (749 aa).

The tryptophyl-tyrosyl-methioninium (Trp-Tyr) (with M-260) cross-link spans 98 to 234 (WHAAGTYRVQ…LAASHMGLIY (137 aa)). H99 functions as the Proton acceptor in the catalytic mechanism. Positions 234 to 260 (YVNPEGPNGEPDPVAAAHDIRTTFGRM) form a cross-link, tryptophyl-tyrosyl-methioninium (Tyr-Met) (with W-98). H275 contributes to the heme b binding site.

This sequence belongs to the peroxidase family. Peroxidase/catalase subfamily. As to quaternary structure, homodimer or homotetramer. The cofactor is heme b. Post-translationally, formation of the three residue Trp-Tyr-Met cross-link is important for the catalase, but not the peroxidase activity of the enzyme.

The protein resides in the cytoplasm. It catalyses the reaction H2O2 + AH2 = A + 2 H2O. The enzyme catalyses 2 H2O2 = O2 + 2 H2O. Bifunctional enzyme with both catalase and broad-spectrum peroxidase activity. This chain is Catalase-peroxidase, found in Mycosarcoma maydis (Corn smut fungus).